Here is a 317-residue protein sequence, read N- to C-terminus: Acetyl-coenzyme A carboxylase carboxyl transferase subunit alpha (317 aa).

The CoA carboxyltransferase C-terminal domain occupies 40–293 (LEVRVREAIV…GDVIANALGE (254 aa)).

This sequence belongs to the AccA family. In terms of assembly, acetyl-CoA carboxylase is a heterohexamer composed of biotin carboxyl carrier protein (AccB), biotin carboxylase (AccC) and two subunits each of ACCase subunit alpha (AccA) and ACCase subunit beta (AccD).

Its subcellular location is the cytoplasm. The catalysed reaction is N(6)-carboxybiotinyl-L-lysyl-[protein] + acetyl-CoA = N(6)-biotinyl-L-lysyl-[protein] + malonyl-CoA. It participates in lipid metabolism; malonyl-CoA biosynthesis; malonyl-CoA from acetyl-CoA: step 1/1. Its function is as follows. Component of the acetyl coenzyme A carboxylase (ACC) complex. First, biotin carboxylase catalyzes the carboxylation of biotin on its carrier protein (BCCP) and then the CO(2) group is transferred by the carboxyltransferase to acetyl-CoA to form malonyl-CoA. This is Acetyl-coenzyme A carboxylase carboxyl transferase subunit alpha from Rhizobium etli (strain ATCC 51251 / DSM 11541 / JCM 21823 / NBRC 15573 / CFN 42).